A 512-amino-acid chain; its full sequence is Alpha-1B-glycoprotein (512 aa).

The first 18 residues, 1 to 18 (MSLLATVLLLWGFTLGPG), serve as a signal peptide directing secretion. Ig-like V-type domains follow at residues 22–126 (MLDS…VTGK), 127–219 (EPLP…MYAS), 220–312 (QAPP…PVEL), 313–415 (MWSD…LRVN), and 416–512 (GPPP…IVEG). 3 N-linked (GlcNAc...) asparagine glycosylation sites follow: Asn44, Asn89, and Asn192. Cystine bridges form between Cys49/Cys96, Cys153/Cys195, Cys245/Cys292, Cys343/Cys392, and Cys441/Cys488. N-linked (GlcNAc...) asparagine glycosylation is found at Asn369, Asn381, Asn389, and Asn485.

Interacts with CRISP3. In terms of tissue distribution, expressed in the liver hepatocytes of male and female GH transgenic mice and in the liver of female, but not of male, non-transgenic mice.

It localises to the secreted. This Mus musculus (Mouse) protein is Alpha-1B-glycoprotein (A1bg).